Consider the following 229-residue polypeptide: Homeobox-leucine zipper protein HOX3 (229 aa).

Residues 1–82 (MMGATSPSGL…GPHRPKKLRL (82 aa)) form a disordered region. Positions 52–68 (GEEEEFPMGSVEEDEEE) are enriched in acidic residues. Residues 75–134 (HRPKKLRLSKEQSRLLEESFRLNHTLTPKQKEALAIKLKLRPRQVEVWFQNRRARTKLKQ) constitute a DNA-binding region (homeobox). Residues 133-177 (KQTEMECEYLKRCFGSLTEENRRLQREVEELRAMRVAPPTVLSPH) form a leucine-zipper region. The disordered stretch occupies residues 198–229 (AATGPPAVRPPPSSAAAAAPSPFHPRRPSAAF).

The protein belongs to the HD-ZIP homeobox family. Class II subfamily. Homodimer. May form a heterodimer with HOX1, HOX2 or HOX7. In terms of tissue distribution, expressed in seedlings, roots, leaves, nodes, internodes, flowers and embryo.

The protein resides in the nucleus. Probable transcription repressor that binds to the DNA sequence 5'-CAAT[GC]ATTG-3'. The chain is Homeobox-leucine zipper protein HOX3 (HOX3) from Oryza sativa subsp. indica (Rice).